Here is an 873-residue protein sequence, read N- to C-terminus: Alanine--tRNA ligase (873 aa).

His-557, His-561, Cys-659, and His-663 together coordinate Zn(2+).

The protein belongs to the class-II aminoacyl-tRNA synthetase family. It depends on Zn(2+) as a cofactor.

It localises to the cytoplasm. The catalysed reaction is tRNA(Ala) + L-alanine + ATP = L-alanyl-tRNA(Ala) + AMP + diphosphate. Catalyzes the attachment of alanine to tRNA(Ala) in a two-step reaction: alanine is first activated by ATP to form Ala-AMP and then transferred to the acceptor end of tRNA(Ala). Also edits incorrectly charged Ser-tRNA(Ala) and Gly-tRNA(Ala) via its editing domain. This Nitrosococcus oceani (strain ATCC 19707 / BCRC 17464 / JCM 30415 / NCIMB 11848 / C-107) protein is Alanine--tRNA ligase.